Reading from the N-terminus, the 316-residue chain is Acetyl-coenzyme A carboxylase carboxyl transferase subunit alpha (316 aa).

Residues 39–293 (RLQDKSESLT…REQLNSQLHM (255 aa)) enclose the CoA carboxyltransferase C-terminal domain.

It belongs to the AccA family. Acetyl-CoA carboxylase is a heterohexamer composed of biotin carboxyl carrier protein (AccB), biotin carboxylase (AccC) and two subunits each of ACCase subunit alpha (AccA) and ACCase subunit beta (AccD).

It is found in the cytoplasm. It carries out the reaction N(6)-carboxybiotinyl-L-lysyl-[protein] + acetyl-CoA = N(6)-biotinyl-L-lysyl-[protein] + malonyl-CoA. The protein operates within lipid metabolism; malonyl-CoA biosynthesis; malonyl-CoA from acetyl-CoA: step 1/1. Functionally, component of the acetyl coenzyme A carboxylase (ACC) complex. First, biotin carboxylase catalyzes the carboxylation of biotin on its carrier protein (BCCP) and then the CO(2) group is transferred by the carboxyltransferase to acetyl-CoA to form malonyl-CoA. This Stutzerimonas stutzeri (strain A1501) (Pseudomonas stutzeri) protein is Acetyl-coenzyme A carboxylase carboxyl transferase subunit alpha.